Here is a 420-residue protein sequence, read N- to C-terminus: Tyrosine--tRNA ligase (420 aa).

Residue Tyr36 participates in L-tyrosine binding. The 'HIGH' region signature appears at 41–50 (PTADSLHIGH). L-tyrosine contacts are provided by Tyr170 and Gln174. The short motif at 231–235 (KFGKS) is the 'KMSKS' region element. Position 234 (Lys234) interacts with ATP. One can recognise an S4 RNA-binding domain in the interval 353 to 420 (TNIVEVLIET…KKKYFMVNYQ (68 aa)).

The protein belongs to the class-I aminoacyl-tRNA synthetase family. TyrS type 1 subfamily. Homodimer.

It is found in the cytoplasm. The catalysed reaction is tRNA(Tyr) + L-tyrosine + ATP = L-tyrosyl-tRNA(Tyr) + AMP + diphosphate + H(+). Functionally, catalyzes the attachment of tyrosine to tRNA(Tyr) in a two-step reaction: tyrosine is first activated by ATP to form Tyr-AMP and then transferred to the acceptor end of tRNA(Tyr). This chain is Tyrosine--tRNA ligase, found in Staphylococcus aureus (strain bovine RF122 / ET3-1).